We begin with the raw amino-acid sequence, 56 residues long: Large ribosomal subunit protein bL32 (56 aa).

The interval 1-35 is disordered; that stretch reads MAVQQNKPTRSKRGMRRSHDALTATHVSVDKTSGE.

It belongs to the bacterial ribosomal protein bL32 family.

This Proteus mirabilis (strain HI4320) protein is Large ribosomal subunit protein bL32.